A 496-amino-acid polypeptide reads, in one-letter code: ATP-dependent protease ATPase subunit HslU2 (496 aa).

Residues 1–10 (MIRFSWVRLC) constitute a mitochondrion transit peptide. Residues valine 51 and 94-99 (GVGKTE) contribute to the ATP site. Residues 177–191 (GSFGSSTRNSGSGDS) are compositionally biased toward low complexity. The tract at residues 177 to 204 (GSFGSSTRNSGSGDSSAEEDKNSSSRDN) is disordered. ATP contacts are provided by aspartate 308, glutamate 374, and arginine 446.

The protein belongs to the ClpX chaperone family. HslU subfamily. A double ring-shaped homohexamer of HslV is capped on each side by a ring-shaped HslU homohexamer. The assembly of the HslU/HslV complex (HslVU) is dependent on binding of ATP.

Its subcellular location is the mitochondrion matrix. The protein localises to the kinetoplast. Its function is as follows. ATPase subunit of a proteasome-like degradation complex; this subunit has chaperone activity. The binding of ATP and its subsequent hydrolysis by HslU are essential for unfolding of protein substrates subsequently hydrolyzed by HslV. HslU recognizes the N-terminal part of its protein substrates and unfolds these before they are guided to HslV for hydrolysis. The HslVU protease complex functions in mitochondrial DNA replication by regulating DNA helicase PIF2 protein levels. This chain is ATP-dependent protease ATPase subunit HslU2 (HslU2), found in Trypanosoma brucei brucei (strain 927/4 GUTat10.1).